Here is an 820-residue protein sequence, read N- to C-terminus: Protein phosphatase 1 regulatory subunit 29 (820 aa).

The signal sequence occupies residues 1-22 (MLRLGLCAAALLCVCRPGAVRA). Residues 23 to 397 (DCWLIEGDKG…APSTSTTTHY (375 aa)) are Extracellular-facing. A glycan (N-linked (GlcNAc...) asparagine) is linked at Asn-54. LRR repeat units lie at residues 56 to 77 (TVHDLRLNENKLKAVLYSSLNR), 80 to 101 (NLTDLNLTKNEISYIEDGAFLG), 104 to 125 (SLQVLQLGYNKLSNLTEGMLRG), 128 to 149 (RLQFLFVQHNLIEVVTPTAFSE), and 152 to 173 (SLISIDLSSNRLSRLDGATFAS). N-linked (GlcNAc...) asparagine glycans are attached at residues Asn-80, Asn-85, and Asn-117. One can recognise an LRRCT domain in the interval 185–247 (NPFNCECDLF…ITVLQAKCRN (63 aa)). Residues Asn-205 and Asn-247 are each glycosylated (N-linked (GlcNAc...) asparagine). Positions 250 to 294 (LPARPVSHPTPYSTDAQREPDENSGFNPDEILSVEPPASSTTDAS) are disordered. A Fibronectin type-III domain is found at 292-379 (DASAGPAIKL…FNHTCLTFTT (88 aa)). Residues 398–418 (IMTILGCLFGMVIVLGAVYYC) traverse the membrane as a helical segment. The Cytoplasmic segment spans residues 419–820 (LRKRRMQEEK…WKGVSAQQKL (402 aa)). 2 disordered regions span residues 508–527 (GAGGDGLARPEDDLPDLENG) and 589–612 (SATGPGALERPSFLSPPYKESSHH). 3 positions are modified to phosphoserine: Ser-619, Ser-668, and Ser-672. The disordered stretch occupies residues 654–677 (TGLAKGDSKYIEKGSPLNSPLDRL).

Interacts with PPP1CA.

It is found in the membrane. Functionally, inhibits phosphatase activity of protein phosphatase 1 (PP1) complexes. This chain is Protein phosphatase 1 regulatory subunit 29 (ELFN2), found in Homo sapiens (Human).